We begin with the raw amino-acid sequence, 362 residues long: UDP-N-acetylglucosamine--N-acetylmuramyl-(pentapeptide) pyrophosphoryl-undecaprenol N-acetylglucosamine transferase (362 aa).

UDP-N-acetyl-alpha-D-glucosamine is bound by residues 15–17, N127, R165, S191, I247, 266–271, and Q292; these read TGG and ALTVSE.

This sequence belongs to the glycosyltransferase 28 family. MurG subfamily.

The protein resides in the cell inner membrane. It carries out the reaction di-trans,octa-cis-undecaprenyl diphospho-N-acetyl-alpha-D-muramoyl-L-alanyl-D-glutamyl-meso-2,6-diaminopimeloyl-D-alanyl-D-alanine + UDP-N-acetyl-alpha-D-glucosamine = di-trans,octa-cis-undecaprenyl diphospho-[N-acetyl-alpha-D-glucosaminyl-(1-&gt;4)]-N-acetyl-alpha-D-muramoyl-L-alanyl-D-glutamyl-meso-2,6-diaminopimeloyl-D-alanyl-D-alanine + UDP + H(+). It participates in cell wall biogenesis; peptidoglycan biosynthesis. Functionally, cell wall formation. Catalyzes the transfer of a GlcNAc subunit on undecaprenyl-pyrophosphoryl-MurNAc-pentapeptide (lipid intermediate I) to form undecaprenyl-pyrophosphoryl-MurNAc-(pentapeptide)GlcNAc (lipid intermediate II). This Shewanella oneidensis (strain ATCC 700550 / JCM 31522 / CIP 106686 / LMG 19005 / NCIMB 14063 / MR-1) protein is UDP-N-acetylglucosamine--N-acetylmuramyl-(pentapeptide) pyrophosphoryl-undecaprenol N-acetylglucosamine transferase.